Consider the following 205-residue polypeptide: SCO2-like protein RP587 (205 aa).

3 residues coordinate Cu cation: Cys82, Cys86, and His172.

This sequence belongs to the SCO1/2 family.

This chain is SCO2-like protein RP587, found in Rickettsia prowazekii (strain Madrid E).